The chain runs to 135 residues: Large ribosomal subunit protein uL16c (135 aa).

The protein belongs to the universal ribosomal protein uL16 family. As to quaternary structure, part of the 50S ribosomal subunit.

The protein localises to the plastid. Its subcellular location is the chloroplast. The protein is Large ribosomal subunit protein uL16c of Euglena gracilis.